Here is a 516-residue protein sequence, read N- to C-terminus: Monocarboxylate transporter 12 (516 aa).

The Cytoplasmic segment spans residues 1–50; the sequence is MPSGSHWTANSSKIITWLLEQPGKEEKRKTMAKVNRARSTSPPDGGWGWM. The next 12 helical transmembrane spans lie at 51-73, 88-108, 116-136, 145-165, 178-198, 207-227, 283-303, 319-339, 350-370, 377-397, 410-430, and 440-460; these read IVAG…SIFF, AWIH…GSVV, VGIM…SFAT, LGVL…AMVG, IAMS…QLLI, LLIL…MRPI, FVVL…LFVY, AFLM…FGWL, YVCY…LPML, VPFS…IPVV, ALGV…PIAG, and TAAF…LGFA. The Cytoplasmic portion of the chain corresponds to 461-516; sequence RLIKRMRKTQLQFIAKESDPKLQLWTNGSVAYSVARELDQKHGEPVATAVPGYSLT.

This sequence belongs to the major facilitator superfamily. Monocarboxylate porter (TC 2.A.1.13) family. As to quaternary structure, interacts with isoform 2 of BSG; this interaction is required for its localization to the plasma membrane. Most highly expressed in kidney, followed by retina, lung, heart and testis. Very weakly expressed in brain and liver. Also detected in lens.

The protein resides in the cell membrane. The protein localises to the basolateral cell membrane. It catalyses the reaction creatine(in) = creatine(out). The enzyme catalyses guanidinoacetate(in) = guanidinoacetate(out). With respect to regulation, creatine uptake is inhibited by carbonyl cyanide 3-chlorophenylhydrazone (CCCP) and by valinomycin. In terms of biological role, functions as a transporter for creatine and as well for its precursor guanidinoacetate. Transport of creatine and GAA is independent of resting membrane potential and extracellular Na(+), Cl(-), or pH. Contributes to the process of creatine biosynthesis and distribution. The protein is Monocarboxylate transporter 12 of Homo sapiens (Human).